The chain runs to 130 residues: MHAPQPAPSPPGAAATGEAAEDRALRYLQARGLSVIARNYRCKTGEIDLVMRDVAGTLVFVEVRARVARSAQRFGGAAASVTPAKQRRLIAAAEDFLAGHPGEVPACRFDVIAIDGTRIEWMRDAFGVEA.

This sequence belongs to the UPF0102 family.

The chain is UPF0102 protein RSc3265 from Ralstonia nicotianae (strain ATCC BAA-1114 / GMI1000) (Ralstonia solanacearum).